The sequence spans 149 residues: MAKLLVLHGPNLNLLGTREPEVYGHTTLADIDQALAAQASTAGHAVESLQSNAEHVLVDRVQAARNDGTAFILINPAAFTHTSVALRDALAAVAVPFIEIHLSNPHTREPFRQHSYFSDKAVGVVCGFGADSYRYAMDAALARVRVAGA.

Y23 serves as the catalytic Proton acceptor. The substrate site is built by N75, H81, and D88. The active-site Proton donor is the H101. Residues 102–103 (LS) and R112 contribute to the substrate site.

Belongs to the type-II 3-dehydroquinase family. In terms of assembly, homododecamer.

The catalysed reaction is 3-dehydroquinate = 3-dehydroshikimate + H2O. It participates in metabolic intermediate biosynthesis; chorismate biosynthesis; chorismate from D-erythrose 4-phosphate and phosphoenolpyruvate: step 3/7. In terms of biological role, catalyzes a trans-dehydration via an enolate intermediate. This chain is 3-dehydroquinate dehydratase, found in Stenotrophomonas maltophilia (strain R551-3).